The primary structure comprises 362 residues: Cobalt-precorrin-5B C(1)-methyltransferase (362 aa).

Belongs to the CbiD family.

It carries out the reaction Co-precorrin-5B + S-adenosyl-L-methionine = Co-precorrin-6A + S-adenosyl-L-homocysteine. Its pathway is cofactor biosynthesis; adenosylcobalamin biosynthesis; cob(II)yrinate a,c-diamide from sirohydrochlorin (anaerobic route): step 6/10. Its function is as follows. Catalyzes the methylation of C-1 in cobalt-precorrin-5B to form cobalt-precorrin-6A. The protein is Cobalt-precorrin-5B C(1)-methyltransferase of Burkholderia lata (strain ATCC 17760 / DSM 23089 / LMG 22485 / NCIMB 9086 / R18194 / 383).